A 275-amino-acid chain; its full sequence is Thiazole synthase (275 aa).

The Schiff-base intermediate with DXP role is filled by lysine 108. 1-deoxy-D-xylulose 5-phosphate is bound by residues glycine 169, 196-197 (AG), and 218-219 (NT).

Belongs to the ThiG family. Homotetramer. Forms heterodimers with either ThiH or ThiS.

The protein localises to the cytoplasm. The catalysed reaction is [ThiS sulfur-carrier protein]-C-terminal-Gly-aminoethanethioate + 2-iminoacetate + 1-deoxy-D-xylulose 5-phosphate = [ThiS sulfur-carrier protein]-C-terminal Gly-Gly + 2-[(2R,5Z)-2-carboxy-4-methylthiazol-5(2H)-ylidene]ethyl phosphate + 2 H2O + H(+). It participates in cofactor biosynthesis; thiamine diphosphate biosynthesis. Its function is as follows. Catalyzes the rearrangement of 1-deoxy-D-xylulose 5-phosphate (DXP) to produce the thiazole phosphate moiety of thiamine. Sulfur is provided by the thiocarboxylate moiety of the carrier protein ThiS. In vitro, sulfur can be provided by H(2)S. This chain is Thiazole synthase, found in Ralstonia nicotianae (strain ATCC BAA-1114 / GMI1000) (Ralstonia solanacearum).